A 762-amino-acid polypeptide reads, in one-letter code: PHD finger protein 20-like protein 1 (762 aa).

2 consecutive Tudor domains span residues 11–71 (ITFE…LERP) and 85–141 (VDFK…EDAK). 5 disordered regions span residues 178–231 (AKNK…TSSD), 289–359 (AEKK…CIKP), 383–411 (SVIN…RSQR), 536–559 (SLKL…EGTE), and 613–651 (LSGK…QHDY). Residues 193–211 (NKDKEERKWLKVPSKKEET) show a composition bias toward basic and acidic residues. 2 stretches are compositionally biased toward polar residues: residues 319 to 340 (DISS…SSGK) and 383 to 398 (SVIN…NSPR). Residues 399–410 (SYKHSQRRRRSQ) are compositionally biased toward basic residues. Positions 614-632 (SGKKKEKEKEKKEKKEKDH) are enriched in basic and acidic residues. Residues 633–647 (KSKQKKKKKKKKKSK) are compositionally biased toward basic residues.

It is found in the nucleus. Is a negative regulator of proteasomal degradation of methylated proteins. Involved in the maintainance of pluripotency of embryonic stem cells. The polypeptide is PHD finger protein 20-like protein 1 (PHF20L1) (Gallus gallus (Chicken)).